The following is a 410-amino-acid chain: Peptidase T (410 aa).

His77 contributes to the Zn(2+) binding site. Asp79 is an active-site residue. Asp140 is a binding site for Zn(2+). The active-site Proton acceptor is the Glu174. Glu175, Asp197, and His379 together coordinate Zn(2+).

Belongs to the peptidase M20B family. Zn(2+) is required as a cofactor.

The protein localises to the cytoplasm. The catalysed reaction is Release of the N-terminal residue from a tripeptide.. Functionally, cleaves the N-terminal amino acid of tripeptides. The chain is Peptidase T from Desulfitobacterium hafniense (strain DSM 10664 / DCB-2).